The following is a 62-amino-acid chain: MAKGVRLIITLECTECRSNPAKRSAGVSRYTTTKNRRNTTARLELNKFCPHCNKHTVHKEIK.

The protein belongs to the bacterial ribosomal protein bL33 family.

In Cyanothece sp. (strain PCC 7425 / ATCC 29141), this protein is Large ribosomal subunit protein bL33.